The following is a 94-amino-acid chain: Pyrimidine/purine nucleoside phosphorylase (94 aa).

This sequence belongs to the nucleoside phosphorylase PpnP family.

It carries out the reaction a purine D-ribonucleoside + phosphate = a purine nucleobase + alpha-D-ribose 1-phosphate. It catalyses the reaction adenosine + phosphate = alpha-D-ribose 1-phosphate + adenine. The catalysed reaction is cytidine + phosphate = cytosine + alpha-D-ribose 1-phosphate. The enzyme catalyses guanosine + phosphate = alpha-D-ribose 1-phosphate + guanine. It carries out the reaction inosine + phosphate = alpha-D-ribose 1-phosphate + hypoxanthine. It catalyses the reaction thymidine + phosphate = 2-deoxy-alpha-D-ribose 1-phosphate + thymine. The catalysed reaction is uridine + phosphate = alpha-D-ribose 1-phosphate + uracil. The enzyme catalyses xanthosine + phosphate = alpha-D-ribose 1-phosphate + xanthine. Its function is as follows. Catalyzes the phosphorolysis of diverse nucleosides, yielding D-ribose 1-phosphate and the respective free bases. Can use uridine, adenosine, guanosine, cytidine, thymidine, inosine and xanthosine as substrates. Also catalyzes the reverse reactions. The sequence is that of Pyrimidine/purine nucleoside phosphorylase from Teredinibacter turnerae (strain ATCC 39867 / T7901).